A 140-amino-acid polypeptide reads, in one-letter code: Hemoglobin subunit alpha-D (140 aa).

The Globin domain occupies 1–140 (MLTDSDKKLV…VCTVLAEKYR (140 aa)). Residues H57 and H86 each contribute to the heme b site.

This sequence belongs to the globin family. Heterotetramer of two alpha-D chains and two beta chains. As to expression, red blood cells.

In terms of biological role, involved in oxygen transport from the lung to the various peripheral tissues. This is Hemoglobin subunit alpha-D (HBAD) from Columba livia (Rock dove).